The following is a 396-amino-acid chain: Anhydro-N-acetylmuramic acid kinase (396 aa).

21 to 28 is an ATP binding site; that stretch reads GTSADGID.

The protein belongs to the anhydro-N-acetylmuramic acid kinase family.

It carries out the reaction 1,6-anhydro-N-acetyl-beta-muramate + ATP + H2O = N-acetyl-D-muramate 6-phosphate + ADP + H(+). It functions in the pathway amino-sugar metabolism; 1,6-anhydro-N-acetylmuramate degradation. Its pathway is cell wall biogenesis; peptidoglycan recycling. Catalyzes the specific phosphorylation of 1,6-anhydro-N-acetylmuramic acid (anhMurNAc) with the simultaneous cleavage of the 1,6-anhydro ring, generating MurNAc-6-P. Is required for the utilization of anhMurNAc either imported from the medium or derived from its own cell wall murein, and thus plays a role in cell wall recycling. The sequence is that of Anhydro-N-acetylmuramic acid kinase from Caldanaerobacter subterraneus subsp. tengcongensis (strain DSM 15242 / JCM 11007 / NBRC 100824 / MB4) (Thermoanaerobacter tengcongensis).